A 740-amino-acid chain; its full sequence is Phosphoribosylformylglycinamidine synthase subunit PurL (740 aa).

The active site involves His-50. The ATP site is built by Tyr-53 and Lys-92. Glu-94 provides a ligand contact to Mg(2+). Substrate contacts are provided by residues 95 to 98 (SHNH) and Arg-117. His-96 functions as the Proton acceptor in the catalytic mechanism. Asp-118 provides a ligand contact to Mg(2+). Gln-241 contributes to the substrate binding site. Asp-269 contacts Mg(2+). 313–315 (ESQ) provides a ligand contact to substrate. Asp-495 and Gly-532 together coordinate ATP. Residue Asn-533 participates in Mg(2+) binding. Substrate is bound at residue Ser-535.

Belongs to the FGAMS family. In terms of assembly, monomer. Part of the FGAM synthase complex composed of 1 PurL, 1 PurQ and 2 PurS subunits.

The protein resides in the cytoplasm. It catalyses the reaction N(2)-formyl-N(1)-(5-phospho-beta-D-ribosyl)glycinamide + L-glutamine + ATP + H2O = 2-formamido-N(1)-(5-O-phospho-beta-D-ribosyl)acetamidine + L-glutamate + ADP + phosphate + H(+). It participates in purine metabolism; IMP biosynthesis via de novo pathway; 5-amino-1-(5-phospho-D-ribosyl)imidazole from N(2)-formyl-N(1)-(5-phospho-D-ribosyl)glycinamide: step 1/2. Part of the phosphoribosylformylglycinamidine synthase complex involved in the purines biosynthetic pathway. Catalyzes the ATP-dependent conversion of formylglycinamide ribonucleotide (FGAR) and glutamine to yield formylglycinamidine ribonucleotide (FGAM) and glutamate. The FGAM synthase complex is composed of three subunits. PurQ produces an ammonia molecule by converting glutamine to glutamate. PurL transfers the ammonia molecule to FGAR to form FGAM in an ATP-dependent manner. PurS interacts with PurQ and PurL and is thought to assist in the transfer of the ammonia molecule from PurQ to PurL. This is Phosphoribosylformylglycinamidine synthase subunit PurL from Brucella abortus (strain S19).